We begin with the raw amino-acid sequence, 316 residues long: Olfactory receptor 5AP2 (316 aa).

At 1-34 (MRLMKEVRGRNQTEVTEFLLLGLSDNPDLQGVLF) the chain is on the extracellular side. The N-linked (GlcNAc...) asparagine glycan is linked to Asn11. Residues 35–55 (ALFLLIYMANMVGNLGMIVLI) traverse the membrane as a helical segment. Residue Lys56 is a topological domain, cytoplasmic. The helical transmembrane segment at 57-77 (IDLCLHTPMYFFLSSLSFVDA) threads the bilayer. Residues 78 to 104 (SYSSSVTPKMLVNLMAENKAISFHGCA) lie on the Extracellular side of the membrane. Cysteines 103 and 195 form a disulfide. The chain crosses the membrane as a helical span at residues 105 to 125 (AQFYFFGSFLGTECFLLAMMA). Topologically, residues 126 to 135 (YDRYAAIWNP) are cytoplasmic. Residues 136–156 (LLYPVLVSGRICFLLIATSFL) traverse the membrane as a helical segment. Over 157–210 (AGCGNAAIHTGMTFRLSFCGSNRINHFYCDTPPLLKLSCSDTHFNGIVIMAFSS) the chain is Extracellular. Residues 211 to 231 (FIVISCVMIVLISYLCIFIAV) form a helical membrane-spanning segment. Residues 232 to 245 (LKMPSLEGRHKAFS) are Cytoplasmic-facing. The helical transmembrane segment at 246-266 (TCASYLMAVTIFFGTILFMYL) threads the bilayer. Residues 267–278 (RPTSSYSMEQDK) lie on the Extracellular side of the membrane. The helical transmembrane segment at 279–299 (VVSVFYTVIIPVLNPLIYSLK) threads the bilayer. Residues 300 to 316 (NKDVKKALKKILWKHIL) lie on the Cytoplasmic side of the membrane.

Belongs to the G-protein coupled receptor 1 family.

It localises to the cell membrane. Odorant receptor. The chain is Olfactory receptor 5AP2 from Homo sapiens (Human).